The primary structure comprises 233 residues: Large ribosomal subunit protein uL2 (233 aa).

The interval 195–233 is disordered; it reads PHGGGNHQHVGRPSTVGRNAPPGRKVGRLSPKRRRVNGR. Residues 219-233 show a composition bias toward basic residues; that stretch reads KVGRLSPKRRRVNGR.

It belongs to the universal ribosomal protein uL2 family. As to quaternary structure, part of the 50S ribosomal subunit. Forms a bridge to the 30S subunit in the 70S ribosome.

In terms of biological role, one of the primary rRNA binding proteins. Required for association of the 30S and 50S subunits to form the 70S ribosome, for tRNA binding and peptide bond formation. It has been suggested to have peptidyltransferase activity; this is somewhat controversial. Makes several contacts with the 16S rRNA in the 70S ribosome. This chain is Large ribosomal subunit protein uL2, found in Thermoplasma acidophilum (strain ATCC 25905 / DSM 1728 / JCM 9062 / NBRC 15155 / AMRC-C165).